Here is a 225-residue protein sequence, read N- to C-terminus: DNA repair and recombination protein RadB (225 aa).

Belongs to the eukaryotic RecA-like protein family. RadB subfamily.

Its function is as follows. Involved in DNA repair and in homologous recombination. May regulate the cleavage reactions of the branch-structured DNA. Has a very weak ATPase activity that is not stimulated by DNA. Binds DNA but does not promote DNA strands exchange. The polypeptide is DNA repair and recombination protein RadB (Methanococcoides burtonii (strain DSM 6242 / NBRC 107633 / OCM 468 / ACE-M)).